Here is a 215-residue protein sequence, read N- to C-terminus: Octanoyltransferase (215 aa).

Residues 42-215 (QNTPDEIWLL…AEKLKARLKQ (174 aa)) enclose the BPL/LPL catalytic domain. Substrate contacts are provided by residues 81–88 (RGGQITYH), 148–150 (ALG), and 161–163 (GLA). Cys179 functions as the Acyl-thioester intermediate in the catalytic mechanism.

It belongs to the LipB family.

The protein localises to the cytoplasm. It carries out the reaction octanoyl-[ACP] + L-lysyl-[protein] = N(6)-octanoyl-L-lysyl-[protein] + holo-[ACP] + H(+). It participates in protein modification; protein lipoylation via endogenous pathway; protein N(6)-(lipoyl)lysine from octanoyl-[acyl-carrier-protein]: step 1/2. Its function is as follows. Catalyzes the transfer of endogenously produced octanoic acid from octanoyl-acyl-carrier-protein onto the lipoyl domains of lipoate-dependent enzymes. Lipoyl-ACP can also act as a substrate although octanoyl-ACP is likely to be the physiological substrate. This chain is Octanoyltransferase, found in Nitrosospira multiformis (strain ATCC 25196 / NCIMB 11849 / C 71).